The sequence spans 101 residues: Thyrotropin subunit beta (101 aa).

Intrachain disulfides connect C2–C88, C10–C66, C14–C68, and C71–C78. N6 carries N-linked (GlcNAc...) asparagine glycosylation.

It belongs to the glycoprotein hormones subunit beta family. Heterodimer of a common alpha chain and a unique beta chain which confers biological specificity to thyrotropin, lutropin, follitropin and gonadotropin.

It localises to the secreted. In terms of biological role, indispensable for the control of thyroid structure and metabolism. In Phodopus sungorus (Striped hairy-footed hamster), this protein is Thyrotropin subunit beta (TSHB).